We begin with the raw amino-acid sequence, 434 residues long: D-amino acid dehydrogenase (434 aa).

3–17 (VIVLGSGVIGTTTAY) provides a ligand contact to FAD.

Belongs to the DadA oxidoreductase family. The cofactor is FAD.

It carries out the reaction a D-alpha-amino acid + A + H2O = a 2-oxocarboxylate + AH2 + NH4(+). Functionally, oxidative deamination of D-amino acids. The polypeptide is D-amino acid dehydrogenase (Bordetella parapertussis (strain 12822 / ATCC BAA-587 / NCTC 13253)).